The primary structure comprises 703 residues: Calpain-8 (703 aa).

The Calpain catalytic domain maps to 45 to 344 (LFKDPEFPAC…FSRLEICNLS (300 aa)). Catalysis depends on residues C105, H262, and N286. The domain III stretch occupies residues 356-379 (WNLVLFNGHWTRGSTAGGCQNYPA). EF-hand domains are found at residues 575–610 (FNIN…IQKY), 618–640 (DYNH…AGFT), and 670–703 (IRLE…CVLV). Residues D588, N590, T592, T594, E599, D618, N620, S622, T624, and E629 each contribute to the Ca(2+) site.

It belongs to the peptidase C2 family. As to quaternary structure, monomer and homooligomer. Interacts with COPS1/GPS1, COPB1, EYA2, NME2, NME4 and TOMM70. The cofactor is Ca(2+). Post-translationally, undergoes autolytic cleavage between Ala-5 and Ala-6 which gives rise to fragments extending from Ala-6 to the C-terminus, Ala-6 to the EF-hand 2 domain and from Ala-6 to the beginning of domain III. In terms of tissue distribution, stomach.

The protein localises to the cytoplasm. The protein resides in the golgi apparatus. The enzyme catalyses Broad endopeptidase specificity.. In terms of biological role, calcium-regulated non-lysosomal thiol-protease. Involved in membrane trafficking in the gastric surface mucus cells (pit cells) and may involve the membrane trafficking of mucus cells via interactions with coat protein. Proteolytically cleaves the beta-subunit of coatomer complex. In Homo sapiens (Human), this protein is Calpain-8 (CAPN8).